A 258-amino-acid polypeptide reads, in one-letter code: Mediator of RNA polymerase II transcription subunit 18 (258 aa).

The protein belongs to the Mediator complex subunit 18 family. In terms of assembly, component of the Mediator complex.

It is found in the nucleus. Functionally, component of the Mediator complex, a coactivator involved in the regulated transcription of nearly all RNA polymerase II-dependent genes. Mediator functions as a bridge to convey information from gene-specific regulatory proteins to the basal RNA polymerase II transcription machinery. Mediator is recruited to promoters by direct interactions with regulatory proteins and serves as a scaffold for the assembly of a functional preinitiation complex with RNA polymerase II and the general transcription factors. This is Mediator of RNA polymerase II transcription subunit 18 (SRB5) from Eremothecium gossypii (strain ATCC 10895 / CBS 109.51 / FGSC 9923 / NRRL Y-1056) (Yeast).